The sequence spans 172 residues: Transcription factor MafF (172 aa).

The tract at residues 51 to 76 is basic motif; it reads RLKQRRRTLKNRGYAASCRVKRVCQK. Residues 51-114 enclose the bZIP domain; it reads RLKQRRRTLK…DALRGKCEAL (64 aa). Residues 79 to 93 are leucine-zipper; the sequence is LQKQKSELEREVDKL. The tract at residues 140–172 is disordered; sequence VKSAPSPGPGPAPGPGPASGPGPAPGPAPAACS. Over residues 145-172 the composition is skewed to pro residues; sequence SPGPGPAPGPGPASGPGPAPGPAPAACS.

Belongs to the bZIP family. Maf subfamily. As to quaternary structure, monomer and homo- or heterodimer. Interacts with MIP. Forms high affinity heterodimers with members of the CNC-bZIP family such as NFE2L1/NRF1.

The protein localises to the nucleus. Since they lack a putative transactivation domain, the small Mafs behave as transcriptional repressors when they dimerize among themselves. However, they seem to serve as transcriptional activators by dimerizing with other (usually larger) basic-zipper proteins, such as NFE2L1/NRF1, and recruiting them to specific DNA-binding sites. Interacts with the upstream promoter region of the oxytocin receptor gene. May be a transcriptional enhancer in the up-regulation of the oxytocin receptor gene at parturition. This is Transcription factor MafF (MAFF) from Bos taurus (Bovine).